Reading from the N-terminus, the 78-residue chain is Large ribosomal subunit protein bL28 (78 aa).

The disordered stretch occupies residues 1–28 (MSRRCQVRGTKPEFGNNVSHSQRHTKRR).

The protein belongs to the bacterial ribosomal protein bL28 family.

In Cutibacterium acnes (strain DSM 16379 / KPA171202) (Propionibacterium acnes), this protein is Large ribosomal subunit protein bL28.